The sequence spans 560 residues: Formate--tetrahydrofolate ligase (560 aa).

70–77 provides a ligand contact to ATP; the sequence is TPAGEGKT.

This sequence belongs to the formate--tetrahydrofolate ligase family.

The catalysed reaction is (6S)-5,6,7,8-tetrahydrofolate + formate + ATP = (6R)-10-formyltetrahydrofolate + ADP + phosphate. Its pathway is one-carbon metabolism; tetrahydrofolate interconversion. The chain is Formate--tetrahydrofolate ligase from Methanocorpusculum labreanum (strain ATCC 43576 / DSM 4855 / Z).